Reading from the N-terminus, the 90-residue chain is Large ribosomal subunit protein bL27 (90 aa).

The tract at residues methionine 1–glycine 22 is disordered.

It belongs to the bacterial ribosomal protein bL27 family.

The sequence is that of Large ribosomal subunit protein bL27 from Coxiella burnetii (strain Dugway 5J108-111).